The following is a 100-amino-acid chain: Mini zinc finger protein 2 (100 aa).

The tract at residues 1-26 (MRKRQVVLRRASPEEPSRSSSTASSL) is disordered. Residues 33 to 83 (YGECQKNHAAAVGGYAVDGCREFMASRGEEGTVAALTCAACGCHRSFHRRE) form a ZF-HD dimerization-type; degenerate zinc finger.

As to quaternary structure, homo- and heterodimers. Interacts with ZHD1, ZHD3, ZHD5, ZHD8, ZHD10 and ZHD13. Mostly expressed in stems, flowers and siliques, and, to a lower extent, in inflorescence.

It localises to the cytoplasm. Functionally, inhibits zinc finger homeodomain (ZHD) transcription factors by interacting with them to prevent both their nuclear localization and their DNA-binding properties. Involved in integrating signals from multiple hormones by regulating the expression of specific genes. This is Mini zinc finger protein 2 (MIF2) from Arabidopsis thaliana (Mouse-ear cress).